We begin with the raw amino-acid sequence, 215 residues long: 23.2 kDa heat shock protein (215 aa).

Residues 1-27 form the signal peptide; sequence MASMRTAAAAAMLACIAVVLASTAADG. The 121-residue stretch at 69 to 189 folds into the sHSP domain; the sequence is DVAMLSMARV…GPRVVGIASA (121 aa). The tract at residues 183-215 is disordered; sequence VVGIASAGGDDGGKKSIGGAGEGQNQQAKKVEL. Over residues 205 to 215 the composition is skewed to polar residues; it reads GQNQQAKKVEL.

This sequence belongs to the small heat shock protein (HSP20) family. As to quaternary structure, may form oligomeric structures.

Its subcellular location is the endoplasmic reticulum. This chain is 23.2 kDa heat shock protein (HSP23.2), found in Oryza sativa subsp. japonica (Rice).